The following is an 879-amino-acid chain: Exocyst complex component 1 (879 aa).

Residues 29–94 (SQYSESEYDP…ATSLGNNDGD (66 aa)) form a disordered region. Residues 40 to 52 (ETTHSESDSENHH) show a composition bias toward basic and acidic residues. Over residues 64 to 76 (FLSQSNDNVSNGP) the composition is skewed to polar residues. A compositionally biased stretch (low complexity) spans 77–91 (SNNTLSSSATSLGNN). 2 coiled-coil regions span residues 165–187 (YNKQ…NKME) and 226–248 (KGLK…KLKS). 2 disordered regions span residues 371-413 (QNDF…GKDG) and 455-557 (GQRN…PDAP). The segment covering 373–409 (DFFSSSSSSKKSIDSLNNNTSTSTPSKNSSSSSSSSS) has biased composition (low complexity). The span at 480–500 (KKSSKKDKKDKKDKKDKKDKK) shows a compositional bias: basic residues. The span at 519–532 (DSNSPKSPNNAVNG) shows a compositional bias: polar residues. A compositionally biased stretch (pro residues) spans 541 to 551 (SPPPPPPPPPK).

Belongs to the SEC3 family. In terms of assembly, the exocyst complex is composed of sec3/exoc1, sec5/exoc2, sec6/exoc3, sec8/exoc4, sec10/exoc5, sec15/exoc6, exo70/exoc7 and exo84/exoc8.

The protein resides in the midbody. It is found in the midbody ring. Component of the exocyst complex involved in the docking of exocytic vesicles with fusion sites on the plasma membrane. This Dictyostelium discoideum (Social amoeba) protein is Exocyst complex component 1 (exoc1).